The following is a 529-amino-acid chain: Bifunctional purine biosynthesis protein PurH (529 aa).

The region spanning 1 to 148 (MQQRRPIRRA…KNHKDVAIVV (148 aa)) is the MGS-like domain.

Belongs to the PurH family.

The catalysed reaction is (6R)-10-formyltetrahydrofolate + 5-amino-1-(5-phospho-beta-D-ribosyl)imidazole-4-carboxamide = 5-formamido-1-(5-phospho-D-ribosyl)imidazole-4-carboxamide + (6S)-5,6,7,8-tetrahydrofolate. It carries out the reaction IMP + H2O = 5-formamido-1-(5-phospho-D-ribosyl)imidazole-4-carboxamide. It participates in purine metabolism; IMP biosynthesis via de novo pathway; 5-formamido-1-(5-phospho-D-ribosyl)imidazole-4-carboxamide from 5-amino-1-(5-phospho-D-ribosyl)imidazole-4-carboxamide (10-formyl THF route): step 1/1. The protein operates within purine metabolism; IMP biosynthesis via de novo pathway; IMP from 5-formamido-1-(5-phospho-D-ribosyl)imidazole-4-carboxamide: step 1/1. The polypeptide is Bifunctional purine biosynthesis protein PurH (Yersinia pseudotuberculosis serotype IB (strain PB1/+)).